We begin with the raw amino-acid sequence, 1268 residues long: ATP-dependent helicase/nuclease subunit A (1268 aa).

A UvrD-like helicase ATP-binding domain is found at 3-476 (TKWTEEQELA…IMLYKNFRSR (474 aa)). 24 to 31 (AAAGSGKT) is a binding site for ATP. Residues 528 to 824 (IENLKVAGDI…RIMSIHKSKG (297 aa)) enclose the UvrD-like helicase C-terminal domain.

The protein belongs to the helicase family. AddA subfamily. Heterodimer of AddA and AddB/RexB. It depends on Mg(2+) as a cofactor.

It catalyses the reaction Couples ATP hydrolysis with the unwinding of duplex DNA by translocating in the 3'-5' direction.. The catalysed reaction is ATP + H2O = ADP + phosphate + H(+). The heterodimer acts as both an ATP-dependent DNA helicase and an ATP-dependent, dual-direction single-stranded exonuclease. Recognizes the chi site generating a DNA molecule suitable for the initiation of homologous recombination. The AddA nuclease domain is required for chi fragment generation; this subunit has the helicase and 3' -&gt; 5' nuclease activities. This is ATP-dependent helicase/nuclease subunit A from Clostridium perfringens (strain 13 / Type A).